A 420-amino-acid polypeptide reads, in one-letter code: Pectate lyase (420 aa).

An N-terminal signal peptide occupies residues 1 to 21 (MKKVMLATALFLGLTPAGANA). Residues 117–139 (TWGKKEPSGTQEEARARSQKNQK) are disordered. The span at 119–132 (GKKEPSGTQEEARA) shows a compositional bias: basic and acidic residues. Ca(2+) is bound by residues Asp205, Asp244, and Asp248. Arg300 is a catalytic residue.

It belongs to the polysaccharide lyase 1 family. Monomer. It depends on Ca(2+) as a cofactor.

It localises to the secreted. It catalyses the reaction Eliminative cleavage of (1-&gt;4)-alpha-D-galacturonan to give oligosaccharides with 4-deoxy-alpha-D-galact-4-enuronosyl groups at their non-reducing ends.. The protein operates within glycan metabolism; pectin degradation; 2-dehydro-3-deoxy-D-gluconate from pectin: step 2/5. Produces unsaturated products from polygalacturonate. This Bacillus subtilis (strain 168) protein is Pectate lyase (pel).